The following is a 670-amino-acid chain: UvrABC system protein B (670 aa).

The Helicase ATP-binding domain occupies 26–183; sequence EGLEDGLAHQ…RRLAELQYSR (158 aa). 39-46 contributes to the ATP binding site; sequence GVTGSGKT. The Beta-hairpin signature appears at 92-115; it reads YYDYYQPEAYVPSSDTFIEKDASV. Positions 431–597 constitute a Helicase C-terminal domain; it reads QVDDLLSEIR…GLNKKISDIL (167 aa). The 36-residue stretch at 630–665 folds into the UVR domain; that stretch reads ELKIRELESKMLTHAQNLEFEEAAALRDELQALRAQ.

The protein belongs to the UvrB family. In terms of assembly, forms a heterotetramer with UvrA during the search for lesions. Interacts with UvrC in an incision complex.

Its subcellular location is the cytoplasm. Functionally, the UvrABC repair system catalyzes the recognition and processing of DNA lesions. A damage recognition complex composed of 2 UvrA and 2 UvrB subunits scans DNA for abnormalities. Upon binding of the UvrA(2)B(2) complex to a putative damaged site, the DNA wraps around one UvrB monomer. DNA wrap is dependent on ATP binding by UvrB and probably causes local melting of the DNA helix, facilitating insertion of UvrB beta-hairpin between the DNA strands. Then UvrB probes one DNA strand for the presence of a lesion. If a lesion is found the UvrA subunits dissociate and the UvrB-DNA preincision complex is formed. This complex is subsequently bound by UvrC and the second UvrB is released. If no lesion is found, the DNA wraps around the other UvrB subunit that will check the other stand for damage. The sequence is that of UvrABC system protein B from Pectobacterium carotovorum subsp. carotovorum (strain PC1).